A 139-amino-acid polypeptide reads, in one-letter code: Lamprin 0.9 (139 aa).

Residues 1–19 (MAAAIQALLVLALLHLATA) form the signal peptide. 8 tandem repeats follow at residues 42–46 (GGLGY), 47–51 (GGLGY), 52–56 (GGLGV), 57–61 (AGLGV), 62–66 (AGLGY), 67–71 (GGLGY), 92–96 (GGLGY), and 106–110 (GGLGY). Residues 42-110 (GGLGYGGLGY…YHHALGGLGY (69 aa)) form an 8 X 5 AA approximate repeats region.

As to quaternary structure, the polymeric lamprin chains self-aggregate to form fibers and have secondary structures particularly rich in beta-sheets and in beta-turns.

The protein resides in the secreted. The protein localises to the extracellular space. It localises to the extracellular matrix. Its function is as follows. Self-aggregating protein that is part of the soluble form of lamprin. The sequence is that of Lamprin 0.9 from Petromyzon marinus (Sea lamprey).